Consider the following 240-residue polypeptide: Orotidine 5'-phosphate decarboxylase (240 aa).

Substrate is bound by residues Asp-16, Lys-37, 64 to 73, Thr-128, Arg-190, Gln-199, Gly-219, and Arg-220; that span reads DLKFHDIPTT. Catalysis depends on Lys-66, which acts as the Proton donor.

The protein belongs to the OMP decarboxylase family. Type 1 subfamily. Homodimer.

The catalysed reaction is orotidine 5'-phosphate + H(+) = UMP + CO2. It participates in pyrimidine metabolism; UMP biosynthesis via de novo pathway; UMP from orotate: step 2/2. In terms of biological role, catalyzes the decarboxylation of orotidine 5'-monophosphate (OMP) to uridine 5'-monophosphate (UMP). In Prochlorococcus marinus (strain SARG / CCMP1375 / SS120), this protein is Orotidine 5'-phosphate decarboxylase.